The primary structure comprises 172 residues: 3-hydroxydecanoyl-[acyl-carrier-protein] dehydratase (172 aa).

His-71 is an active-site residue.

Belongs to the thioester dehydratase family. FabA subfamily. Homodimer.

The protein resides in the cytoplasm. The catalysed reaction is a (3R)-hydroxyacyl-[ACP] = a (2E)-enoyl-[ACP] + H2O. The enzyme catalyses (3R)-hydroxydecanoyl-[ACP] = (2E)-decenoyl-[ACP] + H2O. It carries out the reaction (2E)-decenoyl-[ACP] = (3Z)-decenoyl-[ACP]. The protein operates within lipid metabolism; fatty acid biosynthesis. Necessary for the introduction of cis unsaturation into fatty acids. Catalyzes the dehydration of (3R)-3-hydroxydecanoyl-ACP to E-(2)-decenoyl-ACP and then its isomerization to Z-(3)-decenoyl-ACP. Can catalyze the dehydratase reaction for beta-hydroxyacyl-ACPs with saturated chain lengths up to 16:0, being most active on intermediate chain length. In Maricaulis maris (strain MCS10) (Caulobacter maris), this protein is 3-hydroxydecanoyl-[acyl-carrier-protein] dehydratase.